The following is a 2195-amino-acid chain: Activating signal cointegrator 1 complex subunit 3 (2195 aa).

Residues 31–88 (EQVVARNKEIMKKRNEKKKEKDRIIEKGQLTWSYFSDSKQNKEKEKENRQIFNKFKEI) adopt a coiled-coil conformation. Residues 367–378 (QLKKDDKKRYKN) show a composition bias toward basic and acidic residues. The segment at 367 to 387 (QLKKDDKKRYKNDQQQQQQQQ) is disordered. In terms of domain architecture, Helicase ATP-binding 1 spans 492 to 675 (ESAYKSNENI…FIRAPASGTH (184 aa)). ATP is bound at residue 505–512 (APTGAGKT). A DEAH box motif is present at residues 617-620 (DEIH). Residues 705–920 (NMNQLCYERL…NVNEAVNWLS (216 aa)) form the Helicase C-terminal 1 domain. The SEC63 1 domain maps to 980–1286 (MTELGRIASH…GSEGIREISF (307 aa)). In terms of domain architecture, Helicase ATP-binding 2 spans 1336–1511 (HTLYYTNNNV…WMGIDRVGLF (176 aa)). Residue 1349-1356 (SPTGSGKT) participates in ATP binding. A DEAH box motif is present at residues 1453-1456 (DEIH). One can recognise a Helicase C-terminal 2 domain in the interval 1545-1750 (SFAAIATYSP…GTIQSKQGAI (206 aa)). The SEC63 2 domain occupies 1810-1969 (PMSMGKIASF…LPHINKDFAD (160 aa)). A compositionally biased stretch (low complexity) spans 2032 to 2062 (TNNNSNNNDDNNNENNNNNNKKNNNNNNNNN). The tract at residues 2032–2064 (TNNNSNNNDDNNNENNNNNNKKNNNNNNNNNKS) is disordered.

The protein belongs to the helicase family.

It localises to the nucleus. The protein localises to the cytoplasm. The protein resides in the cytosol. It carries out the reaction Couples ATP hydrolysis with the unwinding of duplex DNA by translocating in the 3'-5' direction.. The enzyme catalyses ATP + H2O = ADP + phosphate + H(+). Its function is as follows. ATPase involved both in DNA repair and rescue of stalled ribosomes. The sequence is that of Activating signal cointegrator 1 complex subunit 3 (ascc3) from Dictyostelium discoideum (Social amoeba).